A 426-amino-acid polypeptide reads, in one-letter code: Oligouridylate-binding protein 1A (426 aa).

The segment at 1-26 (MQNQRLIKQQQQQQQQQHQQAMIQQA) is disordered. Positions 9-26 (QQQQQQQQQHQQAMIQQA) are enriched in low complexity. 2 consecutive RRM domains span residues 63 to 137 (RSVY…WAYA) and 148 to 226 (FNIF…WATK). The disordered stretch occupies residues 230-268 (FGEDKHSSDGKSVVELTNGSSEDGRELSNEDAPENNPQF). Phosphoserine is present on S250. The RRM 3 domain maps to 269–344 (TTVYVGNLSP…RQIRCSWGNK (76 aa)).

Interacts with UBA1A and UBA2A.

It is found in the nucleus. Its function is as follows. Heterogeneous nuclear ribonucleoprotein (hnRNP)-like protein that acts as a component of the pre-mRNA processing machinery. Functions to facilitate the nuclear maturation of plant pre-mRNAs. The sequence is that of Oligouridylate-binding protein 1A (UBP1A) from Arabidopsis thaliana (Mouse-ear cress).